The chain runs to 737 residues: Transcription termination factor Rho (737 aa).

Residues M1–D396 form a disordered region. 3 stretches are compositionally biased toward low complexity: residues R16–S28, A62–A86, and D101–T111. 4 stretches are compositionally biased toward basic and acidic residues: residues P145 to R175, S196 to D256, G266 to Q279, and D286 to G324. A compositionally biased stretch (basic residues) spans R328–R339. A compositionally biased stretch (polar residues) spans A347–P360. The Rho RNA-BD domain occupies E367 to S439. Positions P376–E387 are enriched in basic and acidic residues. ATP contacts are provided by residues G487 to A492, R499 to T504, and R530.

Belongs to the Rho family. In terms of assembly, homohexamer. The homohexamer assembles into an open ring structure.

In terms of biological role, facilitates transcription termination by a mechanism that involves Rho binding to the nascent RNA, activation of Rho's RNA-dependent ATPase activity, and release of the mRNA from the DNA template. The protein is Transcription termination factor Rho of Gemmatimonas aurantiaca (strain DSM 14586 / JCM 11422 / NBRC 100505 / T-27).